We begin with the raw amino-acid sequence, 325 residues long: 4-hydroxy-3-methylbut-2-enyl diphosphate reductase (325 aa).

Cysteine 25 is a binding site for [4Fe-4S] cluster. The (2E)-4-hydroxy-3-methylbut-2-enyl diphosphate site is built by histidine 54 and histidine 87. Dimethylallyl diphosphate is bound by residues histidine 54 and histidine 87. Positions 54 and 87 each coordinate isopentenyl diphosphate. Residue cysteine 109 participates in [4Fe-4S] cluster binding. Position 137 (histidine 137) interacts with (2E)-4-hydroxy-3-methylbut-2-enyl diphosphate. Dimethylallyl diphosphate is bound at residue histidine 137. Isopentenyl diphosphate is bound at residue histidine 137. Glutamate 139 acts as the Proton donor in catalysis. Threonine 179 contacts (2E)-4-hydroxy-3-methylbut-2-enyl diphosphate. Cysteine 209 contributes to the [4Fe-4S] cluster binding site. (2E)-4-hydroxy-3-methylbut-2-enyl diphosphate contacts are provided by serine 237, serine 238, asparagine 239, and serine 282. 4 residues coordinate dimethylallyl diphosphate: serine 237, serine 238, asparagine 239, and serine 282. Residues serine 237, serine 238, asparagine 239, and serine 282 each coordinate isopentenyl diphosphate.

It belongs to the IspH family. [4Fe-4S] cluster is required as a cofactor.

The enzyme catalyses isopentenyl diphosphate + 2 oxidized [2Fe-2S]-[ferredoxin] + H2O = (2E)-4-hydroxy-3-methylbut-2-enyl diphosphate + 2 reduced [2Fe-2S]-[ferredoxin] + 2 H(+). The catalysed reaction is dimethylallyl diphosphate + 2 oxidized [2Fe-2S]-[ferredoxin] + H2O = (2E)-4-hydroxy-3-methylbut-2-enyl diphosphate + 2 reduced [2Fe-2S]-[ferredoxin] + 2 H(+). It participates in isoprenoid biosynthesis; dimethylallyl diphosphate biosynthesis; dimethylallyl diphosphate from (2E)-4-hydroxy-3-methylbutenyl diphosphate: step 1/1. The protein operates within isoprenoid biosynthesis; isopentenyl diphosphate biosynthesis via DXP pathway; isopentenyl diphosphate from 1-deoxy-D-xylulose 5-phosphate: step 6/6. Functionally, catalyzes the conversion of 1-hydroxy-2-methyl-2-(E)-butenyl 4-diphosphate (HMBPP) into a mixture of isopentenyl diphosphate (IPP) and dimethylallyl diphosphate (DMAPP). Acts in the terminal step of the DOXP/MEP pathway for isoprenoid precursor biosynthesis. The chain is 4-hydroxy-3-methylbut-2-enyl diphosphate reductase from Corynebacterium glutamicum (strain ATCC 13032 / DSM 20300 / JCM 1318 / BCRC 11384 / CCUG 27702 / LMG 3730 / NBRC 12168 / NCIMB 10025 / NRRL B-2784 / 534).